The following is a 196-amino-acid chain: UMP-CMP kinase (196 aa).

Gly-13–Thr-18 is an ATP binding site. The segment at Ser-33 to Val-63 is NMP. A ribonucleoside 5'-phosphate is bound by residues Arg-39, Lys-61 to Val-63, and Gly-93 to Arg-96. Asn-100 lines the CMP pocket. Residues Glu-133–Asp-143 are LID. Arg-134 lines the ATP pocket. Residues Arg-140 and Arg-151 each contribute to the a ribonucleoside 5'-phosphate site. Position 179 (Arg-179) interacts with ATP.

Belongs to the adenylate kinase family. UMP-CMP kinase subfamily. In terms of assembly, monomer. Mg(2+) is required as a cofactor.

The protein resides in the nucleus. It is found in the cytoplasm. The catalysed reaction is CMP + ATP = CDP + ADP. It carries out the reaction dCMP + ATP = dCDP + ADP. The enzyme catalyses UMP + ATP = UDP + ADP. It catalyses the reaction a 2'-deoxyribonucleoside 5'-diphosphate + ATP = a 2'-deoxyribonucleoside 5'-triphosphate + ADP. The catalysed reaction is a ribonucleoside 5'-diphosphate + ATP = a ribonucleoside 5'-triphosphate + ADP. Catalyzes the phosphorylation of pyrimidine nucleoside monophosphates at the expense of ATP. Plays an important role in de novo pyrimidine nucleotide biosynthesis. Has preference for UMP and CMP as phosphate acceptors. Also displays broad nucleoside diphosphate kinase activity. This Danio rerio (Zebrafish) protein is UMP-CMP kinase (cmpk).